An 84-amino-acid chain; its full sequence is Cytoplasmic envelopment protein 3 (84 aa).

Residue Gly-2 is the site of N-myristoyl glycine; by host attachment. The segment at 40–46 (DLDDLRC) is asp/Glu-rich (acidic).

Belongs to the herpesviridae cytoplasmic envelopment protein 3 family. As to quaternary structure, interacts with cytoplasmic envelopment protein 2; this interaction is essential for the proper localization of each protein to the assembly complex and thus for the production of infectious virus. Myristoylation and palmitoylation (probably on one or more of the nearby cysteines at the N-terminus) enable membrane-binding and Golgi apparatus-specific targeting and are essential for efficient packaging. Post-translationally, phosphorylated. Phosphorylation does not seem to be required for recycling to the host Golgi apparatus. Packaging is selective for underphosphorylated forms.

It localises to the virion tegument. The protein resides in the virion membrane. It is found in the host cell membrane. The protein localises to the host Golgi apparatus membrane. Its function is as follows. Plays an important role in the cytoplasmic envelopment of tegument proteins and capsids during the assembly and egress processes. Also participates in viral entry at the fusion step probably by regulating the core fusion machinery. This is Cytoplasmic envelopment protein 3 (MDV023) from Gallus gallus (Chicken).